We begin with the raw amino-acid sequence, 118 residues long: Large ribosomal subunit protein bL20 (118 aa).

Belongs to the bacterial ribosomal protein bL20 family.

Binds directly to 23S ribosomal RNA and is necessary for the in vitro assembly process of the 50S ribosomal subunit. It is not involved in the protein synthesizing functions of that subunit. The sequence is that of Large ribosomal subunit protein bL20 from Thermotoga petrophila (strain ATCC BAA-488 / DSM 13995 / JCM 10881 / RKU-1).